The primary structure comprises 114 residues: Large ribosomal subunit protein uL22 (114 aa).

This sequence belongs to the universal ribosomal protein uL22 family. As to quaternary structure, part of the 50S ribosomal subunit.

Its function is as follows. This protein binds specifically to 23S rRNA; its binding is stimulated by other ribosomal proteins, e.g. L4, L17, and L20. It is important during the early stages of 50S assembly. It makes multiple contacts with different domains of the 23S rRNA in the assembled 50S subunit and ribosome. In terms of biological role, the globular domain of the protein is located near the polypeptide exit tunnel on the outside of the subunit, while an extended beta-hairpin is found that lines the wall of the exit tunnel in the center of the 70S ribosome. The chain is Large ribosomal subunit protein uL22 from Methylacidiphilum infernorum (isolate V4) (Methylokorus infernorum (strain V4)).